Consider the following 218-residue polypeptide: N-(5'-phosphoribosyl)anthranilate isomerase (218 aa).

This sequence belongs to the TrpF family.

It catalyses the reaction N-(5-phospho-beta-D-ribosyl)anthranilate = 1-(2-carboxyphenylamino)-1-deoxy-D-ribulose 5-phosphate. It functions in the pathway amino-acid biosynthesis; L-tryptophan biosynthesis; L-tryptophan from chorismate: step 3/5. This is N-(5'-phosphoribosyl)anthranilate isomerase from Chelativorans sp. (strain BNC1).